The sequence spans 30 residues: Cyclotide hyen-C (30 aa).

The segment at residues 1 to 30 is a cross-link (cyclopeptide (Gly-Asn)); the sequence is GTHPCQETCVTSTRCSTQGCHCNWPICFKN. 3 disulfides stabilise this stretch: Cys5-Cys20, Cys9-Cys22, and Cys15-Cys27.

Post-translationally, this is a cyclic peptide. As to expression, detected in stems (at protein level).

Functionally, probably participates in a plant defense mechanism. Does not display any cytotoxic activity towards K562, HeLa, MCF-7, HUVEC or red blood cells. Does not bind to phospholipd membranes containing 1-palmitoyl 2-oleoyl phosphatidylcholine (POPC) or 1-palmitoyl-2-oleophosphatidylethanolamine (POPE). The sequence is that of Cyclotide hyen-C from Pigea enneasperma (Spade flower).